Reading from the N-terminus, the 408-residue chain is Elongation factor Tu, chloroplastic (408 aa).

The tr-type G domain maps to 10 to 213; sequence KPHVNIGTIG…KVDEYIPTPE (204 aa). The tract at residues 19 to 26 is G1; it reads GHVDHGKT. 19–26 contacts GTP; it reads GHVDHGKT. Mg(2+) is bound at residue Thr-26. Positions 59-63 are G2; that stretch reads GITIN. The segment at 80-83 is G3; it reads DCPG. Residues 80–84 and 135–138 contribute to the GTP site; these read DCPGH and NKAD. The G4 stretch occupies residues 135–138; sequence NKAD. Positions 173-175 are G5; that stretch reads SAL.

Belongs to the TRAFAC class translation factor GTPase superfamily. Classic translation factor GTPase family. EF-Tu/EF-1A subfamily.

It localises to the plastid. The protein resides in the chloroplast. The enzyme catalyses GTP + H2O = GDP + phosphate + H(+). Its function is as follows. GTP hydrolase that promotes the GTP-dependent binding of aminoacyl-tRNA to the A-site of ribosomes during protein biosynthesis. This is Elongation factor Tu, chloroplastic (tufA) from Guillardia theta (Cryptophyte).